A 100-amino-acid polypeptide reads, in one-letter code: Urease subunit gamma (100 aa).

It belongs to the urease gamma subunit family. In terms of assembly, heterotrimer of UreA (gamma), UreB (beta) and UreC (alpha) subunits. Three heterotrimers associate to form the active enzyme.

It localises to the cytoplasm. It carries out the reaction urea + 2 H2O + H(+) = hydrogencarbonate + 2 NH4(+). Its pathway is nitrogen metabolism; urea degradation; CO(2) and NH(3) from urea (urease route): step 1/1. In Mesorhizobium japonicum (strain LMG 29417 / CECT 9101 / MAFF 303099) (Mesorhizobium loti (strain MAFF 303099)), this protein is Urease subunit gamma.